A 377-amino-acid polypeptide reads, in one-letter code: Palmitoyltransferase ZDHHC16 (377 aa).

Residues 1–77 (MRGQRSLLLG…VYWLVDNVIR (77 aa)) lie on the Cytoplasmic side of the membrane. The helical transmembrane segment at 78-98 (WFGVVFVVLVIVLTGSIVAIA) threads the bilayer. The Lumenal portion of the chain corresponds to 99–116 (YLCVLPLILRTYSVPRLC). Residues 117–137 (WHFFYSHWNLILIVFHYYQAI) form a helical membrane-spanning segment. Residues 138-198 (TTPPGYPPQG…NNCVGHYNHR (61 aa)) lie on the Cytoplasmic side of the membrane. The DHHC domain maps to 155–205 (SICKKCIYPKPARTHHCSICNRCVLKMDHHCPWLNNCVGHYNHRYFFSFCF). The S-palmitoyl cysteine intermediate role is filled by Cys185. A helical transmembrane segment spans residues 199 to 219 (YFFSFCFFMTLGCVYCSYGSW). Over 220-266 (DLFREAYAAIEKMKQLDKNKLQAVANQTYHQTPPPIFSFRERMTHKS) the chain is Lumenal. The chain crosses the membrane as a helical span at residues 267 to 287 (LVYLWFLCSSVALALGALTVW). The Cytoplasmic segment spans residues 288-377 (HAVLISRGET…TAHSASVMAV (90 aa)).

Belongs to the DHHC palmitoyltransferase family. Interacts with ABL1. Interacts with COPS5/JAB1.

It is found in the endoplasmic reticulum membrane. It carries out the reaction L-cysteinyl-[protein] + hexadecanoyl-CoA = S-hexadecanoyl-L-cysteinyl-[protein] + CoA. Functionally, palmitoyl acyltransferase that mediates palmitoylation of proteins such as PLN and ZDHHC6. Required during embryonic heart development and cardiac function, possibly by mediating palmitoylation of PLN, thereby affecting PLN phosphorylation and homooligomerization. Also required for eye development. Palmitoylates ZDHHC6, affecting the quaternary assembly of ZDHHC6, its localization, stability and function. May play a role in DNA damage response. May be involved in apoptosis regulation. Involved in the proliferation of neural stem cells by regulating the FGF/ERK pathway. The sequence is that of Palmitoyltransferase ZDHHC16 from Macaca fascicularis (Crab-eating macaque).